The primary structure comprises 63 residues: U7-theraphotoxin-Cg1a (63 aa).

Positions 1 to 21 (MKTSILFVIFGLALLFALSVA) are cleaved as a signal peptide. A propeptide spanning residues 22–31 (IEMEEEETDR) is cleaved from the precursor. 3 disulfide bridges follow: cysteine 33/cysteine 47, cysteine 40/cysteine 52, and cysteine 46/cysteine 59.

As to expression, expressed by the venom gland.

Its subcellular location is the secreted. Its function is as follows. Inhibits preferentially tetrodotoxin-insensitive sodium currents (Nav) on rat cardiac myocytes (IC(50) is 0.26 uM) and has weaker inhibition activity toward tetrodotoxin-sensitive sodium currents on rat dorsal root ganglion (DRG) sensory neurons (IC(50) is 0.83 uM) and on cockroach dorsal unpaired median (DUM) neurons (IC(50) is 1.19 uM). Has no significant effect on potassium currents on DRG neurons. This is U7-theraphotoxin-Cg1a from Chilobrachys guangxiensis (Chinese earth tiger tarantula).